The primary structure comprises 353 residues: Magnesium-chelatase subunit ChlI (353 aa).

Residue 45–52 (GDRGTGKS) participates in ATP binding.

Belongs to the Mg-chelatase subunits D/I family.

The protein localises to the plastid. It localises to the chloroplast. It carries out the reaction protoporphyrin IX + Mg(2+) + ATP + H2O = Mg-protoporphyrin IX + ADP + phosphate + 3 H(+). It functions in the pathway porphyrin-containing compound metabolism; chlorophyll biosynthesis. Involved in chlorophyll biosynthesis; introduces a magnesium ion into protoporphyrin IX to yield Mg-protoporphyrin IX. This Trieres chinensis (Marine centric diatom) protein is Magnesium-chelatase subunit ChlI (chlI).